A 378-amino-acid chain; its full sequence is MTKVVVGLSGGVDSAVAAFLLKKQGYLVEAVFMRNWDSNLNFDIQGNPTLNDICPQELDYKDALKVSEQLGIKLHRVDFIEEYWQKVFMSFIKAFENNLTPNPDILCNNEIKFRAFIEYVTTKLAPRYIAMGHYANIIYETFSEQKLFPQLACAVDQNKDQTYFLSQLATKQLQNILFPLGNLTKQEVRQIALENNLINATKKDSTGICFIGERNFFQFLSNYLPAQKGDIKTLDGTFLAHHKGVMYYTIGQRKNLGLGDFSSQKPWFVVGKHLQTNTLYVEQGNTHPYLYSDKALISDIVWRGKKTNLHLQAKMRYRQPNQDVILTWIDQNTLEIYYPQTIKAVTPGQICAFYNNNICCGAGVIKEVYFQGTKRLYT.

Residues 7 to 14 (GLSGGVDS) and methionine 33 contribute to the ATP site. Residues 102–104 (NPD) are interaction with target base in tRNA. Cysteine 107 functions as the Nucleophile in the catalytic mechanism. A disulfide bridge links cysteine 107 with cysteine 209. Glycine 132 is a binding site for ATP. An interaction with tRNA region spans residues 159–161 (KDQ). Cysteine 209 (cysteine persulfide intermediate) is an active-site residue. The interaction with tRNA stretch occupies residues 316-317 (RY).

The protein belongs to the MnmA/TRMU family.

The protein localises to the cytoplasm. The catalysed reaction is S-sulfanyl-L-cysteinyl-[protein] + uridine(34) in tRNA + AH2 + ATP = 2-thiouridine(34) in tRNA + L-cysteinyl-[protein] + A + AMP + diphosphate + H(+). Functionally, catalyzes the 2-thiolation of uridine at the wobble position (U34) of tRNA, leading to the formation of s(2)U34. The chain is tRNA-specific 2-thiouridylase MnmA from Aster yellows witches'-broom phytoplasma (strain AYWB).